A 362-amino-acid polypeptide reads, in one-letter code: MGTKPTEQVSWGLYSGYDEEAYSVGPLPELCYKADVQAFSRAFQPSVSLMVAVLGLAGNGLVLATHLAARRTTRSPTSVHLLQLALADLLLALTLPFAAAGALQGWNLGSTTCRAISGLYSASFHAGFLFLACISADRYVAIARALPAGQRPSTPSRAHLVSVFVWLLSLFLALPALLFSRDGPREGQRRCRLIFPESLTQTVKGASAVAQVVLGFALPLGVMAACYALLGRTLLAARGPERRRALRVVVALVVAFVVLQLPYSLALLLDTADLLAARERSCSSSKRKDLALLVTGGLTLVRCSLNPVLYAFLGLRFRRDLRRLLQGGGCSPKPNPRGRCPRRLRLSSCSAPTETHSLSWDN.

The Extracellular portion of the chain corresponds to 1–48 (MGTKPTEQVSWGLYSGYDEEAYSVGPLPELCYKADVQAFSRAFQPSVS). A helical membrane pass occupies residues 49–69 (LMVAVLGLAGNGLVLATHLAA). The Cytoplasmic segment spans residues 70-80 (RRTTRSPTSVH). A helical membrane pass occupies residues 81–101 (LLQLALADLLLALTLPFAAAG). Topologically, residues 102–115 (ALQGWNLGSTTCRA) are extracellular. Cys113 and Cys191 form a disulfide bridge. A helical membrane pass occupies residues 116-136 (ISGLYSASFHAGFLFLACISA). The Cytoplasmic segment spans residues 137 to 159 (DRYVAIARALPAGQRPSTPSRAH). Residues 160-180 (LVSVFVWLLSLFLALPALLFS) traverse the membrane as a helical segment. Residues 181-208 (RDGPREGQRRCRLIFPESLTQTVKGASA) are Extracellular-facing. The chain crosses the membrane as a helical span at residues 209 to 229 (VAQVVLGFALPLGVMAACYAL). At 230 to 247 (LGRTLLAARGPERRRALR) the chain is on the cytoplasmic side. Residues 248 to 268 (VVVALVVAFVVLQLPYSLALL) form a helical membrane-spanning segment. Residues 269 to 291 (LDTADLLAARERSCSSSKRKDLA) are Extracellular-facing. Residues 292-312 (LLVTGGLTLVRCSLNPVLYAF) form a helical membrane-spanning segment. Over 313–362 (LGLRFRRDLRRLLQGGGCSPKPNPRGRCPRRLRLSSCSAPTETHSLSWDN) the chain is Cytoplasmic.

Belongs to the G-protein coupled receptor 1 family. As to expression, expressed at high levels in small intestine, colon, lymph nodes, Peyer patches and at lower levels in thymus, lung and spleen.

The protein resides in the cell membrane. In terms of biological role, receptor for chemokines SCYA27 and SCYA28. Subsequently transduces a signal by increasing the intracellular calcium ions level. The protein is C-C chemokine receptor type 10 (Ccr10) of Mus musculus (Mouse).